The following is a 186-amino-acid chain: Threonylcarbamoyl-AMP synthase (186 aa).

Residues 3–186 (ILSLSECVDR…IINGSLIRHG (184 aa)) enclose the YrdC-like domain.

The protein belongs to the SUA5 family. TsaC subfamily.

The protein localises to the cytoplasm. The enzyme catalyses L-threonine + hydrogencarbonate + ATP = L-threonylcarbamoyladenylate + diphosphate + H2O. Functionally, required for the formation of a threonylcarbamoyl group on adenosine at position 37 (t(6)A37) in tRNAs that read codons beginning with adenine. Catalyzes the conversion of L-threonine, HCO(3)(-)/CO(2) and ATP to give threonylcarbamoyl-AMP (TC-AMP) as the acyladenylate intermediate, with the release of diphosphate. The sequence is that of Threonylcarbamoyl-AMP synthase from Buchnera aphidicola subsp. Baizongia pistaciae (strain Bp).